Reading from the N-terminus, the 722-residue chain is Glycine--tRNA ligase beta subunit (722 aa).

Belongs to the class-II aminoacyl-tRNA synthetase family. Tetramer of two alpha and two beta subunits.

Its subcellular location is the cytoplasm. It catalyses the reaction tRNA(Gly) + glycine + ATP = glycyl-tRNA(Gly) + AMP + diphosphate. The chain is Glycine--tRNA ligase beta subunit (glyS) from Synechocystis sp. (strain ATCC 27184 / PCC 6803 / Kazusa).